The primary structure comprises 61 residues: DNA-directed RNA polymerase subunit 12-like protein (61 aa).

Positions 21, 24, 38, and 41 each coordinate Zn(2+).

This sequence belongs to the archaeal Rpo12/eukaryotic RPC10 RNA polymerase subunit family.

It is found in the nucleus. The protein is DNA-directed RNA polymerase subunit 12-like protein (NRPB12L) of Arabidopsis thaliana (Mouse-ear cress).